A 343-amino-acid chain; its full sequence is MENLNKDFTLVGSKGSDSTEKIAKPALSFFQDAWRRFKKNKIALVAMWIIAITLVFSVISAFVVPQSKANYFNPNKSQVYGNLPPKLSGDLPFWNGDFKAPGSAEKTDVYKAQGVPEKDKYVFGTDKYGRSLAKRTVVGLRISLIIALAAALIDLVIGVTYGIISGWMGGKVDMVMQRIIEIIQSVPNLVVVTMLALLLGQGISSIIIAIGLFAWTGMARQVRNMVLSYKERDFVLASKTLGQSTWKIAVKHLLPNVSGVIVVQIMFDIPSMIMYEAVLSAINLGVKPPTSSLGTLINDGIASLQFYPFQLIIPAIVLSVLSLTFIFFGDGLRDAFDPRASED.

5 consecutive transmembrane segments (helical) span residues 44 to 64 (LVAM…AFVV), 144 to 164 (LIIA…YGII), 195 to 215 (LALL…LFAW), 259 to 279 (GVIV…EAVL), and 309 to 329 (FQLI…IFFG). The region spanning 140–329 (LRISLIIALA…VLSLTFIFFG (190 aa)) is the ABC transmembrane type-1 domain.

The protein belongs to the binding-protein-dependent transport system permease family. OppBC subfamily. As to quaternary structure, the complex is composed of two ATP-binding proteins (DppD and DppF), two transmembrane proteins (DppB and DppC) and a solute-binding protein (DppA).

The protein resides in the cell membrane. In terms of biological role, part of the ABC transporter DppABCDF involved in dipeptide transport. Responsible for the translocation of the substrate across the membrane. This Lactococcus lactis subsp. cremoris (strain MG1363) protein is Dipeptide transport system permease protein DppC.